Consider the following 148-residue polypeptide: Large ribosomal subunit protein bL9 (148 aa).

Belongs to the bacterial ribosomal protein bL9 family.

Functionally, binds to the 23S rRNA. The chain is Large ribosomal subunit protein bL9 from Pseudomonas putida (strain ATCC 700007 / DSM 6899 / JCM 31910 / BCRC 17059 / LMG 24140 / F1).